The sequence spans 485 residues: Glutamyl-tRNA(Gln) amidotransferase subunit A (485 aa).

Residues Lys79 and Ser154 each act as charge relay system in the active site. The active-site Acyl-ester intermediate is Ser178.

This sequence belongs to the amidase family. GatA subfamily. In terms of assembly, heterotrimer of A, B and C subunits.

It catalyses the reaction L-glutamyl-tRNA(Gln) + L-glutamine + ATP + H2O = L-glutaminyl-tRNA(Gln) + L-glutamate + ADP + phosphate + H(+). Its function is as follows. Allows the formation of correctly charged Gln-tRNA(Gln) through the transamidation of misacylated Glu-tRNA(Gln) in organisms which lack glutaminyl-tRNA synthetase. The reaction takes place in the presence of glutamine and ATP through an activated gamma-phospho-Glu-tRNA(Gln). This Clostridium botulinum (strain ATCC 19397 / Type A) protein is Glutamyl-tRNA(Gln) amidotransferase subunit A.